Consider the following 182-residue polypeptide: Mu-like prophage FluMu protein gp45 (182 aa).

The segment at 159-182 is disordered; it reads TDHQSSGISGKNHDHEERVGKPVP. Positions 169–182 are enriched in basic and acidic residues; it reads KNHDHEERVGKPVP.

To phage Mu protein gp45.

The polypeptide is Mu-like prophage FluMu protein gp45 (Haemophilus influenzae (strain ATCC 51907 / DSM 11121 / KW20 / Rd)).